A 237-amino-acid polypeptide reads, in one-letter code: MTYTRVLLKLSGEALMGSQGYGIDPAIVQSIASDVAKVVANGTQLAIVVGGGNIFRGLKGSAAGMERATADYVGMLATVMNAITLQDGLERAGVPTRVQTAIAMQEVAEPYIRRKAIRHLEKNRVVVFGAGCGNPFFTTDTTAALRAAEINADVVFKATKVDGVYDKDPAKHADAVKHPQLSYQDVLSGELGVMDSTAIALCKDNNIPIVVFNLFEPGNIGRAVAGEPIGSRIGDPA.

9–12 (KLSG) serves as a coordination point for ATP. The tract at residues 17 to 22 (GSQGYG) is involved in allosteric activation by GTP. UMP is bound at residue Gly51. The ATP site is built by Gly52 and Arg56. UMP is bound by residues Asp71 and 132–139 (CGNPFFTT). Residues Thr159, Tyr165, and Asp168 each contribute to the ATP site.

It belongs to the UMP kinase family. Homohexamer.

The protein resides in the cytoplasm. It carries out the reaction UMP + ATP = UDP + ADP. The protein operates within pyrimidine metabolism; CTP biosynthesis via de novo pathway; UDP from UMP (UMPK route): step 1/1. Allosterically activated by GTP. Inhibited by UTP. Functionally, catalyzes the reversible phosphorylation of UMP to UDP. This chain is Uridylate kinase, found in Synechococcus sp. (strain CC9605).